A 280-amino-acid polypeptide reads, in one-letter code: Dermonecrotic toxin LgSicTox-alphaIA1 (280 aa).

H12 is a catalytic residue. The Mg(2+) site is built by E32 and D34. The Nucleophile role is filled by H48. C52 and C58 form a disulfide bridge. A Mg(2+)-binding site is contributed by D92.

The protein belongs to the arthropod phospholipase D family. Class I subfamily. Mg(2+) is required as a cofactor. Expressed by the venom gland.

It is found in the secreted. It catalyses the reaction an N-(acyl)-sphingosylphosphocholine = an N-(acyl)-sphingosyl-1,3-cyclic phosphate + choline. The enzyme catalyses an N-(acyl)-sphingosylphosphoethanolamine = an N-(acyl)-sphingosyl-1,3-cyclic phosphate + ethanolamine. The catalysed reaction is a 1-acyl-sn-glycero-3-phosphocholine = a 1-acyl-sn-glycero-2,3-cyclic phosphate + choline. It carries out the reaction a 1-acyl-sn-glycero-3-phosphoethanolamine = a 1-acyl-sn-glycero-2,3-cyclic phosphate + ethanolamine. Dermonecrotic toxins cleave the phosphodiester linkage between the phosphate and headgroup of certain phospholipids (sphingolipid and lysolipid substrates), forming an alcohol (often choline) and a cyclic phosphate. This toxin acts on sphingomyelin (SM). It may also act on ceramide phosphoethanolamine (CPE), lysophosphatidylcholine (LPC) and lysophosphatidylethanolamine (LPE), but not on lysophosphatidylserine (LPS), and lysophosphatidylglycerol (LPG). It acts by transphosphatidylation, releasing exclusively cyclic phosphate products as second products. Induces dermonecrosis, hemolysis, increased vascular permeability, edema, inflammatory response, and platelet aggregation. In Loxosceles gaucho (Spider), this protein is Dermonecrotic toxin LgSicTox-alphaIA1.